Here is a 314-residue protein sequence, read N- to C-terminus: DNA-directed RNA polymerase subunit alpha (314 aa).

An alpha N-terminal domain (alpha-NTD) region spans residues 1–228 (MIEFEKPNIH…EHLAMFVDLT (228 aa)). The tract at residues 245–314 (KEKMLEMTIE…DLGVSFRQDD (70 aa)) is alpha C-terminal domain (alpha-CTD).

It belongs to the RNA polymerase alpha chain family. Homodimer. The RNAP catalytic core consists of 2 alpha, 1 beta, 1 beta' and 1 omega subunit. When a sigma factor is associated with the core the holoenzyme is formed, which can initiate transcription.

The catalysed reaction is RNA(n) + a ribonucleoside 5'-triphosphate = RNA(n+1) + diphosphate. In terms of biological role, DNA-dependent RNA polymerase catalyzes the transcription of DNA into RNA using the four ribonucleoside triphosphates as substrates. This Limosilactobacillus reuteri (strain DSM 20016) (Lactobacillus reuteri) protein is DNA-directed RNA polymerase subunit alpha.